The following is a 289-amino-acid chain: ATP synthase subunit a (289 aa).

6 consecutive transmembrane segments (helical) span residues 43–63 (AFHL…VLIF), 104–124 (IAPL…VDLI), 160–180 (LSVF…GGFI), 193–213 (IFVQ…TLIA), 232–252 (VFIL…GLGV), and 259–279 (AVFH…LTIV).

Belongs to the ATPase A chain family. As to quaternary structure, F-type ATPases have 2 components, CF(1) - the catalytic core - and CF(0) - the membrane proton channel. CF(1) has five subunits: alpha(3), beta(3), gamma(1), delta(1), epsilon(1). CF(0) has three main subunits: a(1), b(2) and c(9-12). The alpha and beta chains form an alternating ring which encloses part of the gamma chain. CF(1) is attached to CF(0) by a central stalk formed by the gamma and epsilon chains, while a peripheral stalk is formed by the delta and b chains.

It is found in the cell inner membrane. Functionally, key component of the proton channel; it plays a direct role in the translocation of protons across the membrane. The polypeptide is ATP synthase subunit a (Pseudomonas fluorescens (strain SBW25)).